The chain runs to 440 residues: Gamma-aminobutyric acid receptor subunit pi (440 aa).

Residues 1–23 (MKRSLHLTFVCLSLFSARMCVQG) form the signal peptide. The Extracellular portion of the chain corresponds to 24 to 241 (NQFNIEVSRS…LVLQFELQRN (218 aa)). Residues Asn-43, Asn-102, and Asn-145 are each glycosylated (N-linked (GlcNAc...) asparagine). A disulfide bond links Cys-160 and Cys-174. N-linked (GlcNAc...) asparagine glycans are attached at residues Asn-196 and Asn-228. The chain crosses the membrane as a helical span at residues 242–262 (VLYFILETYVPSTFLVVLSWV). Residues 263-270 (SFWISLDS) lie on the Cytoplasmic side of the membrane. A helical transmembrane segment spans residues 271–290 (VPARTCIGVTTVLSMTTLMI). Residues 291-301 (GSRTSLPNTNC) lie on the Extracellular side of the membrane. Residues 302-322 (FIKAIDVYLGICFSFVFGALL) traverse the membrane as a helical segment. Topologically, residues 323-419 (EYAVAHYSSL…NPSNVDRYSK (97 aa)) are cytoplasmic. A helical membrane pass occupies residues 420–440 (LLFPLIFMLANVFYWAYYMYF).

Belongs to the ligand-gated ion channel (TC 1.A.9) family. Gamma-aminobutyric acid receptor (TC 1.A.9.5) subfamily. GABRP sub-subfamily. In terms of assembly, heteropentamer, formed by a combination of alpha (GABRA1-6), beta (GABRB1-3), gamma (GABRG1-3), delta (GABRD), epsilon (GABRE), rho (GABRR1-3), pi (GABRP) and theta (GABRQ) chains, each subunit exhibiting distinct physiological and pharmacological properties.

The protein localises to the cell membrane. Its subcellular location is the apical cell membrane. The enzyme catalyses chloride(in) = chloride(out). Functionally, pi subunit of the heteropentameric ligand-gated chloride channel gated by gamma-aminobutyric acid (GABA). GABA-gated chloride channels, also named GABA(A) receptors (GABAAR), consist of five subunits arranged around a central pore and contain GABA active binding site(s) located at the alpha and beta subunit interfaces. When activated by GABA, GABAARs selectively allow the flow of chloride anions across the cell membrane down their electrochemical gradient. Pi-containing GABAARs are mostly located in peripheral tissues. In the uterus, pi subunits modulate uterus contraction by altering the sensitivity of GABAARs to pregnanolone. In the lungs, pi-containing GABAARs contribute to pulmonary fluid transport via luminal secretion of chloride. This is Gamma-aminobutyric acid receptor subunit pi (GABRP) from Bos taurus (Bovine).